Here is a 77-residue protein sequence, read N- to C-terminus: Large ribosomal subunit protein bL28 (77 aa).

This sequence belongs to the bacterial ribosomal protein bL28 family.

The sequence is that of Large ribosomal subunit protein bL28 from Albidiferax ferrireducens (strain ATCC BAA-621 / DSM 15236 / T118) (Rhodoferax ferrireducens).